A 447-amino-acid polypeptide reads, in one-letter code: Argininosuccinate synthase (447 aa).

Residues 20–28 and alanine 46 contribute to the ATP site; that span reads AFSGGLDTS. Tyrosine 102 provides a ligand contact to L-citrulline. ATP-binding residues include glycine 132 and threonine 134. Threonine 134, asparagine 138, and aspartate 139 together coordinate L-aspartate. Asparagine 138 contributes to the L-citrulline binding site. ATP is bound at residue aspartate 139. L-citrulline-binding residues include arginine 142 and serine 195. Position 197 (aspartate 197) interacts with ATP. Threonine 204, glutamate 206, and glutamate 283 together coordinate L-citrulline.

Belongs to the argininosuccinate synthase family. Type 2 subfamily. As to quaternary structure, homotetramer.

The protein localises to the cytoplasm. The catalysed reaction is L-citrulline + L-aspartate + ATP = 2-(N(omega)-L-arginino)succinate + AMP + diphosphate + H(+). The protein operates within amino-acid biosynthesis; L-arginine biosynthesis; L-arginine from L-ornithine and carbamoyl phosphate: step 2/3. The sequence is that of Argininosuccinate synthase from Neisseria meningitidis serogroup C / serotype 2a (strain ATCC 700532 / DSM 15464 / FAM18).